The following is a 483-amino-acid chain: Regulatory protein ViaA (483 aa).

The protein belongs to the ViaA family. Homodimer. Interacts with RavA.

It is found in the cytoplasm. Functionally, component of the RavA-ViaA chaperone complex, which may act on the membrane to optimize the function of some of the respiratory chains. ViaA stimulates the ATPase activity of RavA. This chain is Regulatory protein ViaA, found in Escherichia fergusonii (strain ATCC 35469 / DSM 13698 / CCUG 18766 / IAM 14443 / JCM 21226 / LMG 7866 / NBRC 102419 / NCTC 12128 / CDC 0568-73).